A 558-amino-acid chain; its full sequence is Armadillo repeat-containing X-linked protein 5 (558 aa).

2 stretches are compositionally biased toward basic and acidic residues: residues 1-14 and 139-156; these read MVDSGTEARARGKA and KSHDKANTGSRPDRREEA. 2 disordered regions span residues 1–34 and 139–163; these read MVDSGTEARARGKAEAGLQDGISGPAAARVNGKT and KSHDKANTGSRPDRREEASIGMKSS. 4 ARM repeats span residues 300–339, 422–461, 463–503, and 520–558; these read CKSRGFSLEPKEFDKLVALLKLTKDPFIHEIATMIMGISP, VKFEDHYVITSYIPDFLTLLNKGSVKTKFYVLKVFSCLSK, HANT…NINF, and SELISIFQEAKQFGQKLQDLAEHSDPEVRDKVIRLILKL.

It belongs to the eutherian X-chromosome-specific Armcx family.

The sequence is that of Armadillo repeat-containing X-linked protein 5 (ARMCX5) from Pongo abelii (Sumatran orangutan).